The sequence spans 153 residues: RNA-binding protein 3 (153 aa).

An RRM domain is found at 6-84; it reads GKLFVGGLNF…RQIRVDHAGK (79 aa). R47 is subject to Omega-N-methylarginine. Residues 81 to 153 are disordered; it reads HAGKSARGSR…GGNYRDNYDN (73 aa). Positions 89-112 are enriched in gly residues; the sequence is SRGGAFGGRGRSYSRGGGDQGYGS. The residue at position 103 (R103) is an Asymmetric dimethylarginine; alternate. R103 carries the post-translational modification Dimethylated arginine; alternate. R103 is modified (omega-N-methylarginine; alternate). Omega-N-methylarginine is present on residues R118 and R128. S133 and S143 each carry phosphoserine. Residue Y151 is modified to Phosphotyrosine.

Interacts with RPL4. Associates with the 60S ribosomal subunits in an RNA-independent manner. In terms of processing, arg-103 is dimethylated, probably to asymmetric dimethylarginine. Post-translationally, phosphorylated.

The protein localises to the nucleus. It localises to the cytoplasm. The protein resides in the cell projection. Its subcellular location is the dendrite. Cold-inducible mRNA binding protein that enhances global protein synthesis at both physiological and mild hypothermic temperatures. Reduces the relative abundance of microRNAs, when overexpressed. Enhances phosphorylation of translation initiation factors and active polysome formation. The chain is RNA-binding protein 3 (Rbm3) from Mus musculus (Mouse).